A 425-amino-acid polypeptide reads, in one-letter code: Dihydroorotase (425 aa).

Residues H61 and H63 each coordinate Zn(2+). Substrate is bound by residues H63–R65 and N95. Positions 146, 175, 224, and 293 each coordinate Zn(2+). N6-carboxylysine is present on K146. The active site involves D293. Substrate contacts are provided by residues H297 and P311–G312.

The protein belongs to the metallo-dependent hydrolases superfamily. DHOase family. Class I DHOase subfamily. It depends on Zn(2+) as a cofactor.

It carries out the reaction (S)-dihydroorotate + H2O = N-carbamoyl-L-aspartate + H(+). Its pathway is pyrimidine metabolism; UMP biosynthesis via de novo pathway; (S)-dihydroorotate from bicarbonate: step 3/3. Its function is as follows. Catalyzes the reversible cyclization of carbamoyl aspartate to dihydroorotate. This Aeropyrum pernix (strain ATCC 700893 / DSM 11879 / JCM 9820 / NBRC 100138 / K1) protein is Dihydroorotase.